Here is a 474-residue protein sequence, read N- to C-terminus: Sestrin homolog (474 aa).

Belongs to the sestrin family.

The protein resides in the nucleus. It localises to the cytoplasm. May function as a negative feedback regulator of TOR function. The sequence is that of Sestrin homolog from Caenorhabditis elegans.